Consider the following 100-residue polypeptide: Cell division topological specificity factor (100 aa).

This sequence belongs to the MinE family.

Its function is as follows. Prevents the cell division inhibition by proteins MinC and MinD at internal division sites while permitting inhibition at polar sites. This ensures cell division at the proper site by restricting the formation of a division septum at the midpoint of the long axis of the cell. This is Cell division topological specificity factor from Blochmanniella floridana.